A 254-amino-acid chain; its full sequence is Ribonuclease HII (254 aa).

The 185-residue stretch at 70–254 (RYICGIDEVG…ASFIKNLTSC (185 aa)) folds into the RNase H type-2 domain. 3 residues coordinate a divalent metal cation: D76, E77, and D168.

Belongs to the RNase HII family. It depends on Mn(2+) as a cofactor. Mg(2+) is required as a cofactor.

The protein resides in the cytoplasm. The enzyme catalyses Endonucleolytic cleavage to 5'-phosphomonoester.. Endonuclease that specifically degrades the RNA of RNA-DNA hybrids. This chain is Ribonuclease HII, found in Lachnoclostridium phytofermentans (strain ATCC 700394 / DSM 18823 / ISDg) (Clostridium phytofermentans).